The chain runs to 1293 residues: MSDEEEDSVSEGFSASEDEWKPSKDVKGGESSDDDDSDFDELQAEGGAAGSSGRSSAVAGKRGDHKAPSGIKGSSVKKRKPTGQSLRSKLYNKYRPPPKTFPTSPSQQKENTPRASGSKNAKTPNESGARNQHGPADSSSESSVEDYLVNPADLDLHSTFFAGGQKEKSPAPQFDCNAGITNLSDSGSEDNNESSFEDKAGNAFDFRGLLENANSLERTRDALSKRNVTATPPRSQAATMDVNALLALGENQNYQSVEVEEREGNQRKKAGRGAPAAPPTLDEPSRLSKTKSTRIKRHTKTRPVSTVVANAGDTDDSDFEEVADADLSSDQDDGETPNISGDLEIRVGLEGLRPTKEQKTQHELEMALKRRLNRDIKDRQILLHKVSLMCQIARSLKYNRLLSESDSLMQATLKLLPSRNAYPTERGTELKYLQSFVTWFKTSIKLLSPNLYSAQSPATKEAILEALLEQVKRKEARCKQDMIFIFIALARGMGMHCRLIVNLQPMPLRPAASDLIPIKLRPDDKNKSQTVESERESEDEKPKKDKKAGKPAEKESSKSTISKEAEKKNNAKKAEAKPLSKSTTKGSETTKSGTVPKVKKELSLSSKLVEKSKHQKAYTSSKSDTSFDEKPSTSSSSKCLKEEYSELGLSKKLLKPTLSSKLVLKSKNQSSFSSNKSDTSFEENPSTSSSSKSLKEETAKLSSSKLEDKKVASPAETKTKVQSSLLKRVTTQNISESGDSKKPKVAPVDTFSPVAGRTRRATVKPKTEEKPQVVGSPVIPKLMLSKVKQLNAKHSDTENASPANKHLQEQRNTRETRSRSKSPKVLISPSFLKKKSDGADSTSDPQKHQMAPETKARISPNFLSEALPARQLRSRGQKASSLAIPQLDGGDDVPLPKKRPKLEKLKNSQDSDEVFEPAKPVKKAPVLPKSVQNLRKDRRVMSTDDEGGSRLNRKTDASDMWVEVWSDVEEQWICIDLFKGKLHCVDTIRKNATPGLAYVFAFQDDQSLKDVTARYCASWSTTVRKARVEKAWLDETIAPYLGRRTKRDITEDDQLRRIHSDKPLPKSISEFKDHPLYVLERHLLKFQGLYPPDAPTLGFIRGEAVYSRDCVHLLHSREIWLKSARVVKLGEQPYKVVKARPKWDRLTRTVIKDQPLEIFGYWQTQEYEPPTAENGIVPRNAYGNVELFKDCMLPKKTVHLRLPGLMRICKKLNIDCANAVVGFDFHQGACHPMYDGFIVCEEFREVVTAAWEEDQQVQVLKEQEKYETRVYGNWKKLIKGLLIRERLKKKYNF.

5 disordered regions span residues 1–199 (MSDE…FEDK), 217–239 (ERTR…QAAT), 255–341 (QSVE…NISG), 514–640 (DLIP…SKCL), and 658–919 (LSSK…EPAK). The span at 18–30 (DEWKPSKDVKGGE) shows a compositional bias: basic and acidic residues. S31, S32, and S37 each carry phosphoserine. A compositionally biased stretch (acidic residues) spans 31 to 43 (SSDDDDSDFDELQ). Low complexity predominate over residues 51–60 (SSGRSSAVAG). 2 stretches are compositionally biased toward polar residues: residues 101 to 130 (FPTS…SGAR) and 226 to 238 (RNVT…SQAA). Residues 288–301 (SKTKSTRIKRHTKT) are compositionally biased toward basic residues. Acidic residues predominate over residues 313-335 (DTDDSDFEEVADADLSSDQDDGE). Basic and acidic residues predominate over residues 520–578 (LRPDDKNKSQTVESERESEDEKPKKDKKAGKPAEKESSKSTISKEAEKKNNAKKAEAKP). 2 positions are modified to phosphoserine: S533 and S537. The span at 580–594 (SKSTTKGSETTKSGT) shows a compositional bias: low complexity. A compositionally biased stretch (basic and acidic residues) spans 598–612 (VKKELSLSSKLVEKS). Over residues 658-692 (LSSKLVLKSKNQSSFSSNKSDTSFEENPSTSSSSK) the composition is skewed to low complexity. The span at 693-711 (SLKEETAKLSSSKLEDKKV) shows a compositional bias: basic and acidic residues. Positions 720–737 (KVQSSLLKRVTTQNISES) are enriched in polar residues. The span at 806 to 818 (HLQEQRNTRETRS) shows a compositional bias: basic and acidic residues. Phosphoserine is present on residues S908 and S911. Short sequence motifs (nuclear localization signal) lie at residues 922 to 938 (KKAP…RKDR), 1195 to 1211 (KKTV…ICKK), and 1275 to 1291 (KKLI…KKKY).

It belongs to the XPC family. Heterodimer.

The protein resides in the nucleus. In terms of biological role, involved in DNA excision repair. May play a part in DNA damage recognition and/or in altering chromatin structure to allow access by damage-processing enzymes. Involved in nucleotide excision repair of DNA damaged with UV light, bulky adducts, or cross-linking agents. This Drosophila melanogaster (Fruit fly) protein is DNA repair protein complementing XP-C cells homolog.